We begin with the raw amino-acid sequence, 227 residues long: Acyl-protein thioesterase 1 (227 aa).

Active-site charge relay system residues include Ser-119, Asp-173, and His-207.

The protein belongs to the AB hydrolase superfamily. AB hydrolase 2 family.

It is found in the cytoplasm. The protein resides in the nucleus. It carries out the reaction S-hexadecanoyl-L-cysteinyl-[protein] + H2O = L-cysteinyl-[protein] + hexadecanoate + H(+). Its function is as follows. Hydrolyzes fatty acids from S-acylated cysteine residues in proteins with a strong preference for palmitoylated G-alpha proteins over other acyl substrates. Mediates the deacylation of G-alpha proteins such as GPA1 in vivo, but has weak or no activity toward palmitoylated Ras proteins. Has weak lysophospholipase activity in vitro; however such activity may not exist in vivo. This chain is Acyl-protein thioesterase 1, found in Saccharomyces cerevisiae (strain ATCC 204508 / S288c) (Baker's yeast).